The primary structure comprises 475 residues: Sulfate adenylyltransferase subunit 1 (475 aa).

Residues 25–239 (KSLLRFLTCG…EVLETVEIQR (215 aa)) form the tr-type G domain. The G1 stretch occupies residues 34–41 (GSVDDGKS). 34 to 41 (GSVDDGKS) lines the GTP pocket. The tract at residues 92 to 96 (GITID) is G2. Residues 113–116 (DTPG) form a G3 region. Residues 113–117 (DTPGH) and 168–171 (NKMD) each bind GTP. Residues 168-171 (NKMD) are G4. The tract at residues 206–208 (SAL) is G5.

It belongs to the TRAFAC class translation factor GTPase superfamily. Classic translation factor GTPase family. CysN/NodQ subfamily. Heterodimer composed of CysD, the smaller subunit, and CysN.

It carries out the reaction sulfate + ATP + H(+) = adenosine 5'-phosphosulfate + diphosphate. It functions in the pathway sulfur metabolism; hydrogen sulfide biosynthesis; sulfite from sulfate: step 1/3. In terms of biological role, with CysD forms the ATP sulfurylase (ATPS) that catalyzes the adenylation of sulfate producing adenosine 5'-phosphosulfate (APS) and diphosphate, the first enzymatic step in sulfur assimilation pathway. APS synthesis involves the formation of a high-energy phosphoric-sulfuric acid anhydride bond driven by GTP hydrolysis by CysN coupled to ATP hydrolysis by CysD. In Citrobacter koseri (strain ATCC BAA-895 / CDC 4225-83 / SGSC4696), this protein is Sulfate adenylyltransferase subunit 1.